Consider the following 473-residue polypeptide: Crt homolog 1 (473 aa).

Residues 1–49 are Cytoplasmic-facing; sequence MTNNDKEKQPLLSSINNEDDNGATINIVEPVPWYSNIPQKIKNSMSKET. Residues 50–70 traverse the membrane as a helical segment; sequence ITILIYVVLYVTSGVINSVLL. Over 71–80 the chain is Vacuolar; it reads KKVMNKFTNY. The helical transmembrane segment at 81-101 threads the bilayer; it reads AFFLSQLTNFGYVPIFGAVTA. The Cytoplasmic segment spans residues 102–121; the sequence is YKIFFTKDIPQETRDFPTRK. The chain crosses the membrane as a helical span at residues 122-142; the sequence is FAIMGALDAITGFFVVIGGVS. Topologically, residues 143 to 146 are vacuolar; the sequence is TSGP. Residues 147–167 traverse the membrane as a helical segment; the sequence is LQQLLNQAIIPFTMIASFIFL. At 168 to 175 the chain is on the cytoplasmic side; it reads KERYSLIQ. The helical transmembrane segment at 176-196 threads the bilayer; sequence LGGALVIIGGVVTSLIPSLLG. Topologically, residues 197–207 are vacuolar; sequence GSSGGNKPFWN. A helical transmembrane segment spans residues 208–228; sequence FFYLLSVIPGALSNVYKDIGF. Over 229–248 the chain is Cytoplasmic; it reads QAVADMDVWYLQYWDSLYQS. A helical membrane pass occupies residues 249-269; the sequence is IFGLFLFPVNNWLPPPATVKF. Residues 270-322 lie on the Vacuolar side of the membrane; sequence EQILPFMKEGAECLAGINSIIPSYINGTSSFTATSCTYAPDATITCDDCHNAW. An N-linked (GlcNAc...) asparagine glycan is attached at Asn-295. A helical transmembrane segment spans residues 323 to 343; the sequence is IVIILYMTINIIYNIFILLVL. At 344-352 the chain is on the cytoplasmic side; the sequence is KHAGATVYS. The helical transmembrane segment at 353-373 threads the bilayer; it reads IANTLRLPLTNIVFSIHFIMG. A topological domain (vacuolar) is located at residue Ser-374. A helical transmembrane segment spans residues 375-395; sequence AVSPFSGLSVAGLVIILVGLG. The Cytoplasmic segment spans residues 396–473; the sequence is GYRVGSMIKQ…AANNNNYGDA (78 aa).

It belongs to the CRT-like transporter family.

It localises to the vacuole membrane. In terms of biological role, nutrient transporter. Involved in maintaining the osmotic homeostasis of the digestive vacuole. This is Crt homolog 1 (crtp1) from Dictyostelium discoideum (Social amoeba).